The following is a 426-amino-acid chain: Aspartate aminotransferase, mitochondrial (426 aa).

The transit peptide at 1 to 29 (MIRSARLISNIKFGQKNIRQFSTNTNWWA) directs the protein to the mitochondrion. Substrate contacts are provided by Gly-60, Trp-156, and Asn-209. Residue Lys-273 is modified to N6-(pyridoxal phosphate)lysine. Residue Arg-401 participates in substrate binding.

Belongs to the class-I pyridoxal-phosphate-dependent aminotransferase family. In terms of assembly, homodimer. The cofactor is pyridoxal 5'-phosphate.

The protein localises to the mitochondrion matrix. It is found in the cell membrane. It carries out the reaction L-aspartate + 2-oxoglutarate = oxaloacetate + L-glutamate. The enzyme catalyses L-kynurenine + 2-oxoglutarate = kynurenate + L-glutamate + H2O. Its function is as follows. Plays a key role in amino acid metabolism. Important for metabolite exchange between mitochondria and cytosol. The polypeptide is Aspartate aminotransferase, mitochondrial (aatA) (Dictyostelium discoideum (Social amoeba)).